The sequence spans 96 residues: Cytochrome c-553 (96 aa).

The first 19 residues, 1 to 19 (MKKVIVALGVLAFANVLMA), serve as a signal peptide directing secretion. Residues Cys-29, Cys-32, His-33, and Met-73 each coordinate heme c.

This sequence belongs to the cytochrome c family. In terms of processing, binds 1 heme c group covalently per subunit.

The protein localises to the periplasm. Functionally, natural electron acceptor for a formate dehydrogenase. The sequence is that of Cytochrome c-553 from Helicobacter pylori (strain J99 / ATCC 700824) (Campylobacter pylori J99).